Here is a 228-residue protein sequence, read N- to C-terminus: Transcription factor zip-11 (228 aa).

The tract at residues 166–202 (RKRQQNKVAAARYRDKQKAKWQDLLDQLEAEEDRNQR) is basic motif. Positions 166–224 (RKRQQNKVAAARYRDKQKAKWQDLLDQLEAEEDRNQRLKLQAGHLEKEVAEMRQAFLAK) constitute a bZIP domain. The segment at 203-210 (LKLQAGHL) is leucine-zipper.

The protein belongs to the bZIP family. In terms of assembly, interacts with CCAAT/enhancer-binding protein cebp-2.

It localises to the nucleus. Transcription factor. Involved in modulating innate immune response pathways, acting to promote resistance against infection by Gram-negative bacterium P.aeruginosa strain PA14. May act as part of a feedback regulatory loop with the pmk-1/p38 MAPK pathway. May also function in concert with CCAAT/enhancer-binding protein cebp-2 to mediate immune responses, independently of the pmk-1/p38 MAPK pathway. In Caenorhabditis elegans, this protein is Transcription factor zip-11.